A 348-amino-acid polypeptide reads, in one-letter code: Ion-translocating oxidoreductase complex subunit D (348 aa).

A run of 5 helical transmembrane segments spans residues 15 to 35 (LTAKFMLWVMVAMLPALGMQA), 36 to 56 (YFFGYGVFIQVFIALLLAVAI), 67 to 87 (LTAFYVADLSGVLTALILAIS), 88 to 108 (IPPYAPYWIIVIGIIVALLLA), and 125 to 145 (VAYALLLVSFPVQMTGWLVPI). Residue Thr-186 is modified to FMN phosphoryl threonine. 5 consecutive transmembrane segments (helical) span residues 212-232 (LFANGWWQINLAFLAGGLLLI), 241-261 (IPAAMLGMFALLSGLTDLLLP), 265-285 (LNVVSQLFSGAMMFGAFFIAT), 298-318 (LIFGGLIGLFVYLIRYYGNYP), and 320-340 (AVAFSVLLANICVPLIDHYTQ).

The protein belongs to the NqrB/RnfD family. The complex is composed of six subunits: RnfA, RnfB, RnfC, RnfD, RnfE and RnfG. Requires FMN as cofactor.

The protein resides in the cell inner membrane. In terms of biological role, part of a membrane-bound complex that couples electron transfer with translocation of ions across the membrane. The polypeptide is Ion-translocating oxidoreductase complex subunit D (Actinobacillus pleuropneumoniae serotype 3 (strain JL03)).